We begin with the raw amino-acid sequence, 691 residues long: Protein 4.2 (691 aa).

G2 carries the N-myristoyl glycine lipid modification. Residues L31–F39 are band 3 binding. Position 248 is a phosphoserine; by PKA (S248).

This sequence belongs to the transglutaminase superfamily. Transglutaminase family. In terms of assembly, component of the ankyrin-1 complex in the erythrocyte, composed of ANK1, RHCE, RHAG, SLC4A1, EPB42, GYPA, GYPB and AQP1. Interacts with SLC4A1 (via the cytoplasmic domain); this interaction is mediated by the SLC4A1 Band 3-I dimer. Interacts with ANK1 (via ANK 1-13 repeats). Interacts with AQP1 (via the C-terminal). Both cAMP-dependent kinase (CAPK) and another kinase present in the red-blood cells seem to be able to phosphorylate EPB42.

It is found in the cell membrane. It localises to the cytoplasm. The protein resides in the cytoskeleton. Functionally, component of the ankyrin-1 complex, a multiprotein complex involved in the stability and shape of the erythrocyte membrane. The polypeptide is Protein 4.2 (Homo sapiens (Human)).